The following is a 123-amino-acid chain: Small ribosomal subunit protein uS12cz/uS12cy (123 aa).

It belongs to the universal ribosomal protein uS12 family. As to quaternary structure, part of the 30S ribosomal subunit.

It is found in the plastid. It localises to the chloroplast. Its function is as follows. With S4 and S5 plays an important role in translational accuracy. Located at the interface of the 30S and 50S subunits. This Cucumis sativus (Cucumber) protein is Small ribosomal subunit protein uS12cz/uS12cy (rps12-A).